The primary structure comprises 504 residues: Anaerobic nitric oxide reductase transcription regulator NorR (504 aa).

Position 57 is a 4-aspartylphosphate (Asp57). In terms of domain architecture, Sigma-54 factor interaction spans 187–416; sequence MIGLSPGMMQ…LEHAIHRAVV (230 aa). Residues 215-222 and 278-287 each bind ATP; these read GETGTGKE and ADNGTLFLDE. Residues 479–498 constitute a DNA-binding region (H-T-H motif); that stretch reads WAACARALEMDVANLHRLAK.

The protein operates within nitrogen metabolism; nitric oxide reduction. Required for the expression of anaerobic nitric oxide (NO) reductase, acts as a transcriptional activator for at least the norVW operon. Activation also requires sigma-54. The chain is Anaerobic nitric oxide reductase transcription regulator NorR from Enterobacter sp. (strain 638).